A 931-amino-acid polypeptide reads, in one-letter code: MAETLSGLGDSGAASAAAVSSAASETGTRRLSDLRVIDLRAELRKRNLTSSGNKSVLMERLKKAIEEEGGNPDEIEVISEGNKKMPKRPSKGKKPEDEGVEDNGLEENSGDGQEDVETSLENLQDMDMMDISVLDEADIDNGSVADCVEEEEEATLPEGLGLLRIGRLQSKGLPEQLQELAIDDKEAINNVDTSSSDFTILQEMEEASLEPENEKILDILGETCKSEPVKEEGSELEQPFAQATSSVGPDRKLAEEEDLFESCGHPEEEEEEEEEEEQEEEQEEEGDLALASSSKSESSSTRCQWSEADALLAVVKREPAEAPGGGTGMDREPVGLEEPVEQSSTAAQLPETTSQELVRAPTAAPSPEPRDSKDDVKKFAFDACNDVPAAPKESSASEGADQKMSSVEDDSDTKRLSREEKGRSSCGRNFWVSGLSSTTRATDLKNLFSRYGKVVGAKVVTNARSPGARCYGFVTMSTAEEATKCINHLHKTELHGKMISVEKAKSEPAGKRVPDRRDGDSKKEKTSTSDRSANLKREEKGDRKDDAKKTDDGSTEKSKDADDQKPGPSERSRTTKSGSRGTERTVVMDKSKGVPVISVKTSGSKERASKSQDRKSVSREKRSVVSFDKVKESRKSRDSESRRERERERSEREQRLQAQWEREERERLEIARERLAFHRHRLERERMERERLERERMHVEQERRREQERIHREREELRRQQELRYEQERRPAVRRPYEVDGRRDDAYWPEAKRAALDDRYHSDFSRQDRFHDFDHRDRGRYPNHSVDRREGSRSMMGDREGQHYPERHGGPERHGRDSRDGWGYGSNKRLSEGRGLPLLPRRDWGEHARRLEDDRAWQGTADGGMMERDQQRWQGGERSMSGHSGPGHMMNRGGMSGRGSFAPGGASRRHVIPRGGMQAGFGGTEPGQQTQ.

Positions 1-24 (MAETLSGLGDSGAASAAAVSSAAS) are enriched in low complexity. Positions 1–35 (MAETLSGLGDSGAASAAAVSSAASETGTRRLSDLR) are disordered. N-acetylalanine is present on A2. Residues S24 and S55 each carry the phosphoserine modification. Residues 31–65 (LSDLRVIDLRAELRKRNLTSSGNKSVLMERLKKAI) enclose the SAP domain. Residues 64-121 (AIEEEGGNPDEIEVISEGNKKMPKRPSKGKKPEDEGVEDNGLEENSGDGQEDVETSLE) form a disordered region. The segment covering 67–77 (EEGGNPDEIEV) has biased composition (acidic residues). Position 79 is a phosphoserine (S79). Over residues 98–118 (EGVEDNGLEENSGDGQEDVET) the composition is skewed to acidic residues. Residues K171 and K185 each participate in a glycyl lysine isopeptide (Lys-Gly) (interchain with G-Cter in SUMO2) cross-link. Phosphoserine occurs at positions 194, 196, and 208. Disordered stretches follow at residues 205-304 (EEAS…TRCQ) and 316-430 (KREP…GRNF). Positions 224–233 (CKSEPVKEEG) are enriched in basic and acidic residues. K230 participates in a covalent cross-link: Glycyl lysine isopeptide (Lys-Gly) (interchain with G-Cter in SUMO). Residues 267–287 (EEEEEEEEEEEQEEEQEEEGD) are compositionally biased toward acidic residues. K316 participates in a covalent cross-link: Glycyl lysine isopeptide (Lys-Gly) (interchain with G-Cter in SUMO). Polar residues predominate over residues 341–356 (EQSSTAAQLPETTSQE). Residues 368–380 (EPRDSKDDVKKFA) are compositionally biased toward basic and acidic residues. Residue K403 forms a Glycyl lysine isopeptide (Lys-Gly) (interchain with G-Cter in SUMO2) linkage. Residues S405 and S406 each carry the phosphoserine modification. The span at 412–423 (DTKRLSREEKGR) shows a compositional bias: basic and acidic residues. A Glycyl lysine isopeptide (Lys-Gly) (interchain with G-Cter in SUMO2) cross-link involves residue K414. An RRM domain is found at 428–506 (RNFWVSGLSS…KMISVEKAKS (79 aa)). S437 bears the Phosphoserine mark. Basic and acidic residues-rich tracts occupy residues 500 to 573 (SVEK…ERSR) and 581 to 592 (GTERTVVMDKSK). Disordered stretches follow at residues 500 to 663 (SVEK…WERE), 691 to 720 (RLER…LRRQ), 759 to 843 (RYHS…PRRD), and 872 to 931 (RWQG…QQTQ). Residues K505, K536, K565, and K592 each participate in a glycyl lysine isopeptide (Lys-Gly) (interchain with G-Cter in SUMO2) cross-link. An interaction with POLR2A; SFRS1; SFRS9 and SFRS10 region spans residues 550–816 (TDDGSTEKSK…RHGGPERHGR (267 aa)). Residue K600 forms a Glycyl lysine isopeptide (Lys-Gly) (interchain with G-Cter in SUMO1); alternate linkage. A Glycyl lysine isopeptide (Lys-Gly) (interchain with G-Cter in SUMO2); alternate cross-link involves residue K600. A phosphoserine mark is found at S602, S604, S623, and S626. Over residues 603-663 (GSKERASKSQ…QRLQAQWERE (61 aa)) the composition is skewed to basic and acidic residues. The Nuclear localization signal signature appears at 621–638 (KRSVVSFDKVKESRKSRD). K629 carries the post-translational modification N6-acetyllysine. Positions 759–820 (RYHSDFSRQD…PERHGRDSRD (62 aa)) are enriched in basic and acidic residues. R834 carries the post-translational modification Omega-N-methylarginine. Asymmetric dimethylarginine is present on residues R892, R898, R908, and R914.

As to quaternary structure, monomer and homodimer. Interacts with KHDRBS3. Interacts with CLK2. Interacts with POLR2A, ASF/SRSF1, SRp30c/SRFS9 and TRA2B/SFRS10. Interacts with SRPK1 and inhibits its activity. Interacts with RBMX. Interacts with FUS. Interacts with ZBED4. Post-translationally, phosphorylated by CDC-like kinase 2 (CLK2). In terms of processing, sumoylated by PIAS1 with SUMO1 and SUMO2/3, desumoylated by SENP1. Sumoylation is required for transcriptional repressor activity.

It is found in the nucleus. Binds to scaffold/matrix attachment region (S/MAR) DNA and forms a molecular assembly point to allow the formation of a 'transcriptosomal' complex (consisting of SR proteins and RNA polymerase II) coupling transcription and RNA processing. Functions as an estrogen receptor corepressor and can also bind to the HSP27 promoter and decrease its transcription. Thereby acts as a negative regulator of cell proliferation. When associated with RBMX, binds to and stimulates transcription from the SREBF1 promoter. This chain is Scaffold attachment factor B1 (Safb), found in Rattus norvegicus (Rat).